The primary structure comprises 182 residues: Putative pre-16S rRNA nuclease (182 aa).

The protein belongs to the YqgF nuclease family.

It localises to the cytoplasm. Its function is as follows. Could be a nuclease involved in processing of the 5'-end of pre-16S rRNA. In Corynebacterium glutamicum (strain ATCC 13032 / DSM 20300 / JCM 1318 / BCRC 11384 / CCUG 27702 / LMG 3730 / NBRC 12168 / NCIMB 10025 / NRRL B-2784 / 534), this protein is Putative pre-16S rRNA nuclease.